A 160-amino-acid chain; its full sequence is Cytochrome b6-f complex subunit 4 (160 aa).

The next 3 helical transmembrane spans lie at 36–56 (LLYM…GLAV), 95–115 (LLGI…PFIE), and 131–151 (AVFL…ALPI).

It belongs to the cytochrome b family. PetD subfamily. As to quaternary structure, the 4 large subunits of the cytochrome b6-f complex are cytochrome b6, subunit IV (17 kDa polypeptide, PetD), cytochrome f and the Rieske protein, while the 4 small subunits are PetG, PetL, PetM and PetN. The complex functions as a dimer.

It is found in the cellular thylakoid membrane. In terms of biological role, component of the cytochrome b6-f complex, which mediates electron transfer between photosystem II (PSII) and photosystem I (PSI), cyclic electron flow around PSI, and state transitions. The sequence is that of Cytochrome b6-f complex subunit 4 from Synechococcus elongatus (strain ATCC 33912 / PCC 7942 / FACHB-805) (Anacystis nidulans R2).